A 46-amino-acid polypeptide reads, in one-letter code: Iota-conotoxin-like R11.17 (46 aa).

2 positions are modified to 4-hydroxyproline: P2 and P11. 4 cysteine pairs are disulfide-bonded: C5-C19, C12-C22, C18-C27, and C21-C38. Residue P29 is modified to 4-hydroxyproline. F44 bears the D-phenylalanine mark.

Belongs to the conotoxin I1 superfamily. Expressed by the venom duct.

The protein resides in the secreted. Functionally, iota-conotoxins bind to voltage-gated sodium channels (Nav) and act as agonists by shifting the voltage-dependence of activation to more hyperpolarized levels. Produces general excitatory symptoms. In Conus radiatus (Rayed cone), this protein is Iota-conotoxin-like R11.17.